Consider the following 319-residue polypeptide: 1-aminocyclopropane-1-carboxylate oxidase (319 aa).

A Fe2OG dioxygenase domain is found at 153-253 (PTFGTKVSNY…RMSIASFYNP (101 aa)). Fe cation-binding residues include histidine 177, aspartate 179, and histidine 234.

It belongs to the iron/ascorbate-dependent oxidoreductase family. The cofactor is Fe cation.

The catalysed reaction is 1-aminocyclopropane-1-carboxylate + L-ascorbate + O2 = ethene + L-dehydroascorbate + hydrogen cyanide + CO2 + 2 H2O. Its pathway is alkene biosynthesis; ethylene biosynthesis via S-adenosyl-L-methionine; ethylene from S-adenosyl-L-methionine: step 2/2. The sequence is that of 1-aminocyclopropane-1-carboxylate oxidase (ACO) from Actinidia deliciosa (Kiwi).